A 506-amino-acid polypeptide reads, in one-letter code: uncharacterized protein (506 aa).

It belongs to the Mg-chelatase subunits D/I family. ComM subfamily.

This is an uncharacterized protein from Salmonella typhimurium (strain LT2 / SGSC1412 / ATCC 700720).